Here is a 312-residue protein sequence, read N- to C-terminus: Ribosomal protein L11 methyltransferase (312 aa).

Thr160, Gly181, Asp203, and Asn246 together coordinate S-adenosyl-L-methionine.

The protein belongs to the methyltransferase superfamily. PrmA family.

It localises to the cytoplasm. The enzyme catalyses L-lysyl-[protein] + 3 S-adenosyl-L-methionine = N(6),N(6),N(6)-trimethyl-L-lysyl-[protein] + 3 S-adenosyl-L-homocysteine + 3 H(+). In terms of biological role, methylates ribosomal protein L11. The chain is Ribosomal protein L11 methyltransferase from Staphylococcus carnosus (strain TM300).